Consider the following 372-residue polypeptide: Glutamate 5-kinase (372 aa).

An ATP-binding site is contributed by Lys-14. Residues Ser-54, Asp-141, and Asn-153 each contribute to the substrate site. Thr-173–Asp-174 is a binding site for ATP. The region spanning Arg-280–Leu-358 is the PUA domain.

The protein belongs to the glutamate 5-kinase family.

Its subcellular location is the cytoplasm. It catalyses the reaction L-glutamate + ATP = L-glutamyl 5-phosphate + ADP. Its pathway is amino-acid biosynthesis; L-proline biosynthesis; L-glutamate 5-semialdehyde from L-glutamate: step 1/2. Functionally, catalyzes the transfer of a phosphate group to glutamate to form L-glutamate 5-phosphate. The protein is Glutamate 5-kinase of Cupriavidus pinatubonensis (strain JMP 134 / LMG 1197) (Cupriavidus necator (strain JMP 134)).